A 437-amino-acid polypeptide reads, in one-letter code: Citrate synthase (437 aa).

Catalysis depends on residues His-316 and Asp-372.

This sequence belongs to the citrate synthase family. As to quaternary structure, homohexamer.

The catalysed reaction is oxaloacetate + acetyl-CoA + H2O = citrate + CoA + H(+). It functions in the pathway carbohydrate metabolism; tricarboxylic acid cycle; isocitrate from oxaloacetate: step 1/2. Weakly inhibited by ATP (apparent Ki = 10 mm). This chain is Citrate synthase (gltA), found in Corynebacterium glutamicum (strain ATCC 13032 / DSM 20300 / JCM 1318 / BCRC 11384 / CCUG 27702 / LMG 3730 / NBRC 12168 / NCIMB 10025 / NRRL B-2784 / 534).